Here is an 85-residue protein sequence, read N- to C-terminus: Large ribosomal subunit protein eL43 (85 aa).

Zn(2+) is bound by residues cysteine 32, cysteine 35, cysteine 50, and cysteine 53. The C4-type zinc finger occupies 32-53; the sequence is CTFCGKTKMKRRAVGIWHCGSC.

The protein belongs to the eukaryotic ribosomal protein eL43 family. As to quaternary structure, component of the large ribosomal subunit.

It localises to the cytoplasm. Its function is as follows. Component of the large ribosomal subunit. The ribosome is a large ribonucleoprotein complex responsible for the synthesis of proteins in the cell. The protein is Large ribosomal subunit protein eL43 (rpl37a) of Myxine glutinosa (Atlantic hagfish).